A 98-amino-acid polypeptide reads, in one-letter code: NADH-ubiquinone oxidoreductase chain 4L (98 aa).

A run of 3 helical transmembrane segments spans residues Met-1–Phe-21, Leu-26–Met-46, and Ala-59–Val-79.

The protein belongs to the complex I subunit 4L family.

The protein localises to the mitochondrion membrane. The enzyme catalyses a ubiquinone + NADH + 5 H(+)(in) = a ubiquinol + NAD(+) + 4 H(+)(out). Functionally, core subunit of the mitochondrial membrane respiratory chain NADH dehydrogenase (Complex I) which catalyzes electron transfer from NADH through the respiratory chain, using ubiquinone as an electron acceptor. Part of the enzyme membrane arm which is embedded in the lipid bilayer and involved in proton translocation. The protein is NADH-ubiquinone oxidoreductase chain 4L (MT-ND4L) of Polypterus ornatipinnis (Ornate bichir).